The primary structure comprises 184 residues: Large ribosomal subunit protein uL10 (184 aa).

Belongs to the universal ribosomal protein uL10 family. Part of the ribosomal stalk of the 50S ribosomal subunit. The N-terminus interacts with L11 and the large rRNA to form the base of the stalk. The C-terminus forms an elongated spine to which L12 dimers bind in a sequential fashion forming a multimeric L10(L12)X complex.

Forms part of the ribosomal stalk, playing a central role in the interaction of the ribosome with GTP-bound translation factors. The chain is Large ribosomal subunit protein uL10 from Gluconobacter oxydans (strain 621H) (Gluconobacter suboxydans).